The sequence spans 207 residues: B2 protein (207 aa).

Residues 1 to 68 (MIDQEESNFN…FKTLPPAESL (68 aa)) are disordered. 2 stretches are compositionally biased toward low complexity: residues 8-26 (NFNF…QFHG) and 35-52 (KNNN…GENK). In terms of domain architecture, DCD spans 72–204 (ETVGGYIFVC…AISLLDIFEE (133 aa)).

The sequence is that of B2 protein from Daucus carota (Wild carrot).